The sequence spans 314 residues: Homoserine O-acetyltransferase (314 aa).

Residue C142 is the Acyl-thioester intermediate of the active site. Residues K163 and S192 each contribute to the substrate site. Catalysis depends on H235, which acts as the Proton acceptor. The active site involves E237. R249 lines the substrate pocket.

Belongs to the MetA family.

Its subcellular location is the cytoplasm. It carries out the reaction L-homoserine + acetyl-CoA = O-acetyl-L-homoserine + CoA. It functions in the pathway amino-acid biosynthesis; L-methionine biosynthesis via de novo pathway; O-acetyl-L-homoserine from L-homoserine: step 1/1. Transfers an acetyl group from acetyl-CoA to L-homoserine, forming acetyl-L-homoserine. The sequence is that of Homoserine O-acetyltransferase from Azobacteroides pseudotrichonymphae genomovar. CFP2.